The primary structure comprises 163 residues: ATP synthase subunit b' (163 aa).

A helical membrane pass occupies residues L28–Y45.

The protein belongs to the ATPase B chain family. F-type ATPases have 2 components, F(1) - the catalytic core - and F(0) - the membrane proton channel. F(1) has five subunits: alpha(3), beta(3), gamma(1), delta(1), epsilon(1). F(0) has four main subunits: a(1), b(1), b'(1) and c(10-14). The alpha and beta chains form an alternating ring which encloses part of the gamma chain. F(1) is attached to F(0) by a central stalk formed by the gamma and epsilon chains, while a peripheral stalk is formed by the delta, b and b' chains.

The protein localises to the cellular thylakoid membrane. Its function is as follows. F(1)F(0) ATP synthase produces ATP from ADP in the presence of a proton or sodium gradient. F-type ATPases consist of two structural domains, F(1) containing the extramembraneous catalytic core and F(0) containing the membrane proton channel, linked together by a central stalk and a peripheral stalk. During catalysis, ATP synthesis in the catalytic domain of F(1) is coupled via a rotary mechanism of the central stalk subunits to proton translocation. Component of the F(0) channel, it forms part of the peripheral stalk, linking F(1) to F(0). The b'-subunit is a diverged and duplicated form of b found in plants and photosynthetic bacteria. The polypeptide is ATP synthase subunit b' (Nostoc sp. (strain PCC 7120 / SAG 25.82 / UTEX 2576)).